Reading from the N-terminus, the 186-residue chain is Elongation factor P (186 aa).

This sequence belongs to the elongation factor P family.

It localises to the cytoplasm. The protein operates within protein biosynthesis; polypeptide chain elongation. In terms of biological role, involved in peptide bond synthesis. Stimulates efficient translation and peptide-bond synthesis on native or reconstituted 70S ribosomes in vitro. Probably functions indirectly by altering the affinity of the ribosome for aminoacyl-tRNA, thus increasing their reactivity as acceptors for peptidyl transferase. The chain is Elongation factor P from Neisseria meningitidis serogroup A / serotype 4A (strain DSM 15465 / Z2491).